Reading from the N-terminus, the 596-residue chain is UDP-glucuronate:xylan alpha-glucuronosyltransferase 2 (596 aa).

Residues 17-37 traverse the membrane as a helical; Signal-anchor for type II membrane protein segment; the sequence is LIRFNLVLLGFSFLLYTAIFF. Positions 395 and 397 each coordinate Mn(2+). Substrate-binding positions include 395-397, 424-426, 451-455, and 504-509; these read DAD, NSG, NGGDQ, and HYLGWK. His504 provides a ligand contact to Mn(2+).

It belongs to the glycosyltransferase 8 family. Glycogenin subfamily. It depends on Mn(2+) as a cofactor.

The protein localises to the golgi apparatus membrane. Glycosyltransferase required for the addition of both glucuronic acid and 4-O-methylglucuronic acid branches to xylan in stem cell walls. In association with GUX1, is responsible for almost all of the substitutions of the xylan backbone in stem glucuronoxylan. The protein is UDP-glucuronate:xylan alpha-glucuronosyltransferase 2 (GUX2) of Arabidopsis thaliana (Mouse-ear cress).